We begin with the raw amino-acid sequence, 88 residues long: MANSPQAKKRARQNERRAEVNKARRSRIRTFLRKVEEAIASGDSSAAADALRSAQPELMRGVTKGILHKNTASRKMSRLSKRVKALSA.

Residues 1–25 are disordered; that stretch reads MANSPQAKKRARQNERRAEVNKARR. Residues 12–22 show a composition bias toward basic and acidic residues; sequence RQNERRAEVNK.

The protein belongs to the bacterial ribosomal protein bS20 family.

Binds directly to 16S ribosomal RNA. In Dinoroseobacter shibae (strain DSM 16493 / NCIMB 14021 / DFL 12), this protein is Small ribosomal subunit protein bS20.